A 245-amino-acid chain; its full sequence is Small ribosomal subunit protein uS2 (245 aa).

This sequence belongs to the universal ribosomal protein uS2 family.

This Pseudomonas putida (strain ATCC 47054 / DSM 6125 / CFBP 8728 / NCIMB 11950 / KT2440) protein is Small ribosomal subunit protein uS2.